A 269-amino-acid chain; its full sequence is Regulatory protein RecX (269 aa).

It belongs to the RecX family.

It is found in the cytoplasm. Modulates RecA activity. The protein is Regulatory protein RecX of Lactococcus lactis subsp. cremoris (strain SK11).